We begin with the raw amino-acid sequence, 230 residues long: MKSFLFAGIVVVLTVAAVDTLRCIQCNSLKDSCVAKNATECPSNATTSCTSFSTNFYHGEHPTWYEDHACSEENCSNTTVESFTVSVSENETFHFESQCCLGEPCNQTSNTTASPHQVGSGNMECPACYGNNETSCNETRKCYGERCVSIIAEFTNETKTLVLKGCSNVSISTCESLGAGNQTFRGVTFRKFECGDNFSTTTPLATTDTGSQASFTPLALASILLLSLLL.

Residues 1-20 (MKSFLFAGIVVVLTVAAVDT) form the signal peptide. N-linked (GlcNAc...) asparagine glycosylation is found at Asn-37, Asn-44, Asn-74, Asn-77, Asn-90, Asn-106, Asn-110, Asn-132, Asn-137, Asn-156, Asn-168, Asn-181, and Asn-197. Positions 125 to 172 (CPACYGNNETSCNETRKCYGERCVSIIAEFTNETKTLVLKGCSNVSIS) constitute a UPAR/Ly6 domain. Residue Ser-211 is the site of GPI-anchor amidated serine attachment. Residues 212–230 (QASFTPLALASILLLSLLL) constitute a propeptide, removed in mature form.

The protein belongs to the CNF-like-inhibitor family. Highly N-glycosylated. Not O-glycosylated. In terms of processing, GPI-anchored. The GPI-anchor is cleaved, leading to secretion into the colonic lumen.

It is found in the cell membrane. The protein localises to the secreted. Secreted protein specifically required to prevent invasion of Gram-negative bacteria in the inner mucus layer of the colon epithelium, a portion of the large intestine which is free of commensal microbiota. Prevents invasion of flagellated microbiota by binding to the flagellum of bacteria, such as P.mirabilis, thereby inhibiting bacterial motility in the intestinal lumen. Segregation of intestinal bacteria and epithelial cells in the colon is required to preserve intestinal homeostasis. The chain is Ly6/PLAUR domain-containing protein 8 (LYPD8) from Bos taurus (Bovine).